The primary structure comprises 179 residues: Large ribosomal subunit protein uL5 (179 aa).

It belongs to the universal ribosomal protein uL5 family. Part of the 50S ribosomal subunit; part of the 5S rRNA/L5/L18/L25 subcomplex. Contacts the 5S rRNA and the P site tRNA. Forms a bridge to the 30S subunit in the 70S ribosome.

Its function is as follows. This is one of the proteins that bind and probably mediate the attachment of the 5S RNA into the large ribosomal subunit, where it forms part of the central protuberance. In the 70S ribosome it contacts protein S13 of the 30S subunit (bridge B1b), connecting the 2 subunits; this bridge is implicated in subunit movement. Contacts the P site tRNA; the 5S rRNA and some of its associated proteins might help stabilize positioning of ribosome-bound tRNAs. The protein is Large ribosomal subunit protein uL5 of Listeria innocua serovar 6a (strain ATCC BAA-680 / CLIP 11262).